Reading from the N-terminus, the 313-residue chain is Acetaldehyde dehydrogenase (313 aa).

13-16 provides a ligand contact to NAD(+); sequence SGNI. C133 functions as the Acyl-thioester intermediate in the catalytic mechanism. NAD(+)-binding positions include 164–172 and N291; that span reads SAGPGTRAN.

It belongs to the acetaldehyde dehydrogenase family.

It catalyses the reaction acetaldehyde + NAD(+) + CoA = acetyl-CoA + NADH + H(+). This is Acetaldehyde dehydrogenase from Cupriavidus pinatubonensis (strain JMP 134 / LMG 1197) (Cupriavidus necator (strain JMP 134)).